Consider the following 411-residue polypeptide: Proline-responsive transcriptional activator PutR (411 aa).

Belongs to the CdaR family.

Its function is as follows. Activates transcription of the putBCP operon. Requires proline as a coactivator. The chain is Proline-responsive transcriptional activator PutR from Bacillus subtilis (strain 168).